A 459-amino-acid polypeptide reads, in one-letter code: Sensor histidine kinase SpaK (459 aa).

Residues 1–18 (MGIGFKGRKTLLRELVKY) lie on the Cytoplasmic side of the membrane. The chain crosses the membrane as a helical span at residues 19 to 39 (MVTLCISLVVLALLYIFINTI). Topologically, residues 40–155 (AMNTGFSHPA…RKYLPNYELT (116 aa)) are extracellular. The helical transmembrane segment at 156–176 (SICILIILLIIVISIITTYFA) threads the bilayer. At 177 to 459 (NRLRKHFETL…VRVKIPLRNE (283 aa)) the chain is on the cytoplasmic side. In terms of domain architecture, Histidine kinase spans 244–458 (ALAHEIKIPI…EVRVKIPLRN (215 aa)). His247 is subject to Phosphohistidine; by autocatalysis.

It is found in the cell membrane. It catalyses the reaction ATP + protein L-histidine = ADP + protein N-phospho-L-histidine.. Functionally, member of the two-component regulatory system SpaK/SpaR involved in the regulation of the biosynthesis of lantibiotic subtilin. SpaK may function as a membrane-associated protein kinase that phosphorylates SpaR in response to environmental signals. This Bacillus subtilis protein is Sensor histidine kinase SpaK (spaK).